Consider the following 283-residue polypeptide: Pantothenate synthetase (283 aa).

33-40 (MGALHEGH) contributes to the ATP binding site. H40 (proton donor) is an active-site residue. (R)-pantoate is bound at residue Q64. Q64 is a binding site for beta-alanine. Residue 150–153 (GEKD) participates in ATP binding. (R)-pantoate is bound at residue Q156. Residues I179 and 187–190 (MSSR) each bind ATP.

The protein belongs to the pantothenate synthetase family. As to quaternary structure, homodimer.

The protein resides in the cytoplasm. The catalysed reaction is (R)-pantoate + beta-alanine + ATP = (R)-pantothenate + AMP + diphosphate + H(+). It participates in cofactor biosynthesis; (R)-pantothenate biosynthesis; (R)-pantothenate from (R)-pantoate and beta-alanine: step 1/1. Functionally, catalyzes the condensation of pantoate with beta-alanine in an ATP-dependent reaction via a pantoyl-adenylate intermediate. The polypeptide is Pantothenate synthetase (Mesorhizobium japonicum (strain LMG 29417 / CECT 9101 / MAFF 303099) (Mesorhizobium loti (strain MAFF 303099))).